Reading from the N-terminus, the 214-residue chain is Thiamine-phosphate synthase (214 aa).

4-amino-2-methyl-5-(diphosphooxymethyl)pyrimidine-binding positions include 37–41 (QYREK) and Asn73. 2 residues coordinate Mg(2+): Asp74 and Asp93. 4-amino-2-methyl-5-(diphosphooxymethyl)pyrimidine is bound at residue Ser112. 139-141 (TIS) is a 2-[(2R,5Z)-2-carboxy-4-methylthiazol-5(2H)-ylidene]ethyl phosphate binding site. Lys142 serves as a coordination point for 4-amino-2-methyl-5-(diphosphooxymethyl)pyrimidine. 2-[(2R,5Z)-2-carboxy-4-methylthiazol-5(2H)-ylidene]ethyl phosphate contacts are provided by residues Gly171 and 191–192 (IS).

It belongs to the thiamine-phosphate synthase family. Mg(2+) serves as cofactor.

The enzyme catalyses 2-[(2R,5Z)-2-carboxy-4-methylthiazol-5(2H)-ylidene]ethyl phosphate + 4-amino-2-methyl-5-(diphosphooxymethyl)pyrimidine + 2 H(+) = thiamine phosphate + CO2 + diphosphate. It catalyses the reaction 2-(2-carboxy-4-methylthiazol-5-yl)ethyl phosphate + 4-amino-2-methyl-5-(diphosphooxymethyl)pyrimidine + 2 H(+) = thiamine phosphate + CO2 + diphosphate. It carries out the reaction 4-methyl-5-(2-phosphooxyethyl)-thiazole + 4-amino-2-methyl-5-(diphosphooxymethyl)pyrimidine + H(+) = thiamine phosphate + diphosphate. The protein operates within cofactor biosynthesis; thiamine diphosphate biosynthesis; thiamine phosphate from 4-amino-2-methyl-5-diphosphomethylpyrimidine and 4-methyl-5-(2-phosphoethyl)-thiazole: step 1/1. Its function is as follows. Condenses 4-methyl-5-(beta-hydroxyethyl)thiazole monophosphate (THZ-P) and 2-methyl-4-amino-5-hydroxymethyl pyrimidine pyrophosphate (HMP-PP) to form thiamine monophosphate (TMP). This chain is Thiamine-phosphate synthase, found in Listeria monocytogenes serotype 4b (strain CLIP80459).